Here is a 244-residue protein sequence, read N- to C-terminus: Putative esophageal gland cell secretory protein 6 (244 aa).

The signal sequence occupies residues 1–22 (MDRRFTVFLVIALVTSIYEVLS). A disulfide bridge links Cys88 with Cys91.

It belongs to the SelWTH family. SELT subfamily.

The polypeptide is Putative esophageal gland cell secretory protein 6 (HSP6) (Heterodera glycines (Soybean cyst nematode worm)).